Reading from the N-terminus, the 92-residue chain is Small ribosomal subunit protein uS19c (92 aa).

This sequence belongs to the universal ribosomal protein uS19 family.

It localises to the plastid. The protein resides in the chloroplast. Protein S19 forms a complex with S13 that binds strongly to the 16S ribosomal RNA. This is Small ribosomal subunit protein uS19c from Calycanthus floridus var. glaucus (Eastern sweetshrub).